The following is a 953-amino-acid chain: Coatomer subunit beta (953 aa).

The residue at position 2 (T2) is an N-acetylthreonine. HEAT repeat units lie at residues 96 to 131 (HEMI…KEAE), 132 to 168 (LLEP…NFEN), 240 to 276 (SERA…SAPT), 277 to 314 (AIKA…HPAH), 316 to 353 (RVLQ…SRNV), and 396 to 433 (DMAA…RFDN). Residue K494 is modified to N6-acetyllysine.

As to quaternary structure, oligomeric complex that consists of at least the alpha, beta, beta', gamma, delta, epsilon and zeta subunits. Interacts with SCYL1. Interacts with CAPN8. Interacts with COPG1. Interacts with ARF1 (myristoylated); this interaction is required for binding of COPB1 to Golgi membranes. Interacts (via trunk domain) with ARF1 (via switch I region); the interaction is direct. Interacts with KCNK2 (via N-terminus); this interaction increases the channel-mediated whole cell currents and promotes plasma membrane expression of KCNK2. Interacts with PRKCE. Interacts with STX17. Interacts with TMEM115. Interacts with TMEM41B. Proteolytically cleaved between Ser-528 and Ser-529 by CAPN8.

It localises to the cytoplasm. It is found in the golgi apparatus membrane. Its subcellular location is the cytoplasmic vesicle. The protein localises to the COPI-coated vesicle membrane. The protein resides in the cell membrane. It localises to the endoplasmic reticulum-Golgi intermediate compartment. It is found in the microsome membrane. The coatomer is a cytosolic protein complex that binds to dilysine motifs and reversibly associates with Golgi non-clathrin-coated vesicles, which further mediate biosynthetic protein transport from the ER, via the Golgi up to the trans Golgi network. Coatomer complex is required for budding from Golgi membranes, and is essential for the retrograde Golgi-to-ER transport of dilysine-tagged proteins. In mammals, the coatomer can only be recruited by membranes associated to ADP-ribosylation factors (ARFs), which are small GTP-binding proteins; the complex also influences the Golgi structural integrity, as well as the processing, activity, and endocytic recycling of LDL receptors. Involved in the Golgi disassembly and reassembly processes during cell cycle. Involved in autophagy by playing a role in early endosome function. Plays a role in organellar compartmentalization of secretory compartments including endoplasmic reticulum (ER)-Golgi intermediate compartment (ERGIC), Golgi, trans-Golgi network (TGN) and recycling endosomes, and in biosynthetic transport of CAV1. Plays a functional role in facilitating the transport of kappa-type opioid receptor mRNAs into axons and enhances translation of these proteins in the axonal compartment of dorsal root ganglion (DRG) cells. Required for limiting lipid storage in lipid droplets. Involved in lipid homeostasis by regulating the presence of perilipin family members PLIN2 and PLIN3 at the lipid droplet surface and promoting the association of adipocyte triglyceride lipase (PNPLA2) with the lipid droplet surface to mediate lipolysis. The chain is Coatomer subunit beta (Copb1) from Rattus norvegicus (Rat).